The sequence spans 350 residues: Probable lactoylglutathione lyase, chloroplastic (350 aa).

The transit peptide at Met1–Leu61 directs the protein to the chloroplast. 2 VOC domains span residues Arg88–Arg212 and Pro218–Asn342. His91 contributes to the Zn(2+) binding site. Arg95 is a binding site for substrate. Residue Glu142 participates in Zn(2+) binding. Residues Asn146 and His160 each contribute to the substrate site. Zn(2+) is bound by residues His160 and Glu208. The active-site Proton donor/acceptor is Glu208.

Belongs to the glyoxalase I family. Zn(2+) serves as cofactor.

It is found in the plastid. The protein resides in the chloroplast stroma. The catalysed reaction is (R)-S-lactoylglutathione = methylglyoxal + glutathione. It functions in the pathway secondary metabolite metabolism; methylglyoxal degradation; (R)-lactate from methylglyoxal: step 1/2. Catalyzes the conversion of hemimercaptal, formed from methylglyoxal and glutathione, to S-lactoylglutathione. In Arabidopsis thaliana (Mouse-ear cress), this protein is Probable lactoylglutathione lyase, chloroplastic.